The primary structure comprises 156 residues: Dihydrofolate reductase (156 aa).

One can recognise a DHFR domain in the interval 1 to 156; it reads MLKLIWCQTL…VNYYSNKKEK (156 aa).

The protein belongs to the dihydrofolate reductase family.

The catalysed reaction is (6S)-5,6,7,8-tetrahydrofolate + NADP(+) = 7,8-dihydrofolate + NADPH + H(+). The protein operates within cofactor biosynthesis; tetrahydrofolate biosynthesis; 5,6,7,8-tetrahydrofolate from 7,8-dihydrofolate: step 1/1. In terms of biological role, key enzyme in folate metabolism. Catalyzes an essential reaction for de novo glycine and purine synthesis, and for DNA precursor synthesis. This Ureaplasma parvum serovar 3 (strain ATCC 700970) protein is Dihydrofolate reductase (folA).